Consider the following 457-residue polypeptide: Cell division protein FtsA (457 aa).

It belongs to the FtsA/MreB family. In terms of assembly, self-interacts. Interacts with FtsZ.

It is found in the cell membrane. In terms of biological role, cell division protein that is involved in the assembly of the Z ring. May serve as a membrane anchor for the Z ring. Increased expression restores growth to a PBP2b (penA) deletion strain as well as mreCD and rodA deletions, but not gpsB or rodZ deletions. Does not restore wild-type cell morphology to the penA deletion. The chain is Cell division protein FtsA from Streptococcus pneumoniae serotype 2 (strain D39 / NCTC 7466).